Consider the following 528-residue polypeptide: Phosphoenolpyruvate carboxykinase (ATP) (528 aa).

Residues arginine 56, tyrosine 192, and lysine 198 each contribute to the substrate site. ATP-binding positions include lysine 198, histidine 217, and 233–241 (GLSGTGKTT). Residues lysine 198 and histidine 217 each contribute to the Mn(2+) site. Residue aspartate 254 participates in Mn(2+) binding. ATP is bound by residues glutamate 282, arginine 319, and threonine 444. Residue arginine 319 participates in substrate binding.

Belongs to the phosphoenolpyruvate carboxykinase (ATP) family. Requires Mn(2+) as cofactor.

It localises to the cytoplasm. The catalysed reaction is oxaloacetate + ATP = phosphoenolpyruvate + ADP + CO2. The protein operates within carbohydrate biosynthesis; gluconeogenesis. Involved in the gluconeogenesis. Catalyzes the conversion of oxaloacetate (OAA) to phosphoenolpyruvate (PEP) through direct phosphoryl transfer between the nucleoside triphosphate and OAA. The sequence is that of Phosphoenolpyruvate carboxykinase (ATP) from Bacillus mycoides (strain KBAB4) (Bacillus weihenstephanensis).